Here is a 466-residue protein sequence, read N- to C-terminus: tRNA-2-methylthio-N(6)-dimethylallyladenosine synthase (466 aa).

One can recognise an MTTase N-terminal domain in the interval 3-123 (KKLYIKTYGC…LPEMVARAVR (121 aa)). Positions 12, 48, 86, 162, 166, and 169 each coordinate [4Fe-4S] cluster. One can recognise a Radical SAM core domain in the interval 148–381 (SPAGPSAFLS…QQLLTAQQTA (234 aa)). The region spanning 384–446 (TACVGRVQPV…ANSLSGTVVV (63 aa)) is the TRAM domain.

This sequence belongs to the methylthiotransferase family. MiaB subfamily. In terms of assembly, monomer. [4Fe-4S] cluster serves as cofactor.

It is found in the cytoplasm. The catalysed reaction is N(6)-dimethylallyladenosine(37) in tRNA + (sulfur carrier)-SH + AH2 + 2 S-adenosyl-L-methionine = 2-methylsulfanyl-N(6)-dimethylallyladenosine(37) in tRNA + (sulfur carrier)-H + 5'-deoxyadenosine + L-methionine + A + S-adenosyl-L-homocysteine + 2 H(+). Catalyzes the methylthiolation of N6-(dimethylallyl)adenosine (i(6)A), leading to the formation of 2-methylthio-N6-(dimethylallyl)adenosine (ms(2)i(6)A) at position 37 in tRNAs that read codons beginning with uridine. This Rhodospirillum centenum (strain ATCC 51521 / SW) protein is tRNA-2-methylthio-N(6)-dimethylallyladenosine synthase.